The following is an 88-amino-acid chain: Small ribosomal subunit protein uS15c (88 aa).

The protein belongs to the universal ribosomal protein uS15 family. Part of the 30S ribosomal subunit.

It is found in the plastid. The protein localises to the chloroplast. This chain is Small ribosomal subunit protein uS15c (rps15), found in Physcomitrium patens (Spreading-leaved earth moss).